We begin with the raw amino-acid sequence, 99 residues long: Ubiquitin-related modifier 1 homolog (99 aa).

Residue glycine 99 is modified to 1-thioglycine. Glycine 99 participates in a covalent cross-link: Glycyl lysine isopeptide (Gly-Lys) (interchain with K-? in acceptor proteins).

It belongs to the URM1 family. C-terminal thiocarboxylation occurs in 2 steps, it is first acyl-adenylated (-COAMP) via the hesA/moeB/thiF part of the MOCS3 homolog, then thiocarboxylated (-COSH) via the rhodanese domain of the MOCS3 homolog.

It localises to the cytoplasm. It functions in the pathway tRNA modification; 5-methoxycarbonylmethyl-2-thiouridine-tRNA biosynthesis. Its function is as follows. Acts as a sulfur carrier required for 2-thiolation of mcm(5)S(2)U at tRNA wobble positions of cytosolic tRNA(Lys), tRNA(Glu) and tRNA(Gln). Serves as sulfur donor in tRNA 2-thiolation reaction by being thiocarboxylated (-COSH) at its C-terminus by MOCS3. The sulfur is then transferred to tRNA to form 2-thiolation of mcm(5)S(2)U. Also acts as a ubiquitin-like protein (UBL) that is covalently conjugated via an isopeptide bond to lysine residues of target proteins. The thiocarboxylated form serves as substrate for conjugation and oxidative stress specifically induces the formation of UBL-protein conjugates. This is Ubiquitin-related modifier 1 homolog from Chlamydomonas reinhardtii (Chlamydomonas smithii).